The sequence spans 59 residues: UPF0181 protein YoaH (59 aa).

Belongs to the UPF0181 family.

The protein is UPF0181 protein YoaH of Shigella flexneri.